The sequence spans 753 residues: 5-methyltetrahydropteroyltriglutamate--homocysteine methyltransferase (753 aa).

5-methyltetrahydropteroyltri-L-glutamate is bound by residues 19–22 and R113; that span reads RELK. Residues 430–432 and E483 each bind L-homocysteine; that span reads IGS. L-methionine contacts are provided by residues 430–432 and E483; that span reads IGS. 5-methyltetrahydropteroyltri-L-glutamate-binding positions include 514–515 and W560; that span reads RC. Residue D598 coordinates L-homocysteine. D598 is an L-methionine binding site. A 5-methyltetrahydropteroyltri-L-glutamate-binding site is contributed by E604. Zn(2+) contacts are provided by H640, C642, and E664. Residue H693 is the Proton donor of the active site. C725 is a binding site for Zn(2+).

It belongs to the vitamin-B12 independent methionine synthase family. Zn(2+) serves as cofactor.

It carries out the reaction 5-methyltetrahydropteroyltri-L-glutamate + L-homocysteine = tetrahydropteroyltri-L-glutamate + L-methionine. Its pathway is amino-acid biosynthesis; L-methionine biosynthesis via de novo pathway; L-methionine from L-homocysteine (MetE route): step 1/1. Functionally, catalyzes the transfer of a methyl group from 5-methyltetrahydrofolate to homocysteine resulting in methionine formation. The protein is 5-methyltetrahydropteroyltriglutamate--homocysteine methyltransferase of Rhodococcus jostii (strain RHA1).